Here is a 92-residue protein sequence, read N- to C-terminus: uncharacterized protein (92 aa).

This sequence belongs to the IUNH family.

This is an uncharacterized protein from Corynebacterium ammoniagenes (Brevibacterium ammoniagenes).